A 75-amino-acid chain; its full sequence is U-stichotoxin-Hau3a (75 aa).

Residues 1–19 form the signal peptide; the sequence is MNHLIILVVAAVFLGMASA. A propeptide spanning residues 20–26 is cleaved from the precursor; the sequence is EDVFHKR. 3 disulfide bridges follow: Cys31–Cys71, Cys33–Cys61, and Cys54–Cys72.

The protein belongs to the sea anemone sodium channel inhibitory toxin family. Type I subfamily. In terms of processing, contains 3 disulfide bonds.

Its subcellular location is the secreted. It is found in the nematocyst. Its function is as follows. Toxin that is lethal to crab. In Heteractis aurora (Banded sea anemone), this protein is U-stichotoxin-Hau3a.